Consider the following 130-residue polypeptide: Small ribosomal subunit protein uS9 (130 aa).

Residues 107–130 (DSREVERKKVGLRKARRRPQFSKR) are disordered. Basic residues predominate over residues 116-130 (VGLRKARRRPQFSKR).

This sequence belongs to the universal ribosomal protein uS9 family.

This chain is Small ribosomal subunit protein uS9, found in Marinomonas sp. (strain MWYL1).